Here is a 231-residue protein sequence, read N- to C-terminus: Flagellar L-ring protein (231 aa).

The N-terminal stretch at 1–18 (MSRLLIVVSLSSAFALAG) is a signal peptide. Cys-19 carries N-palmitoyl cysteine lipidation. Cys-19 carries S-diacylglycerol cysteine lipidation.

The protein belongs to the FlgH family. As to quaternary structure, the basal body constitutes a major portion of the flagellar organelle and consists of four rings (L,P,S, and M) mounted on a central rod.

It localises to the cell outer membrane. The protein resides in the bacterial flagellum basal body. Assembles around the rod to form the L-ring and probably protects the motor/basal body from shearing forces during rotation. The polypeptide is Flagellar L-ring protein (Stutzerimonas stutzeri (strain A1501) (Pseudomonas stutzeri)).